A 425-amino-acid chain; its full sequence is Glutamyl-tRNA reductase (425 aa).

Substrate-binding positions include 49–52 (TCNR), serine 107, 112–114 (EPQ), and glutamine 118. Catalysis depends on cysteine 50, which acts as the Nucleophile. 187 to 192 (GAGETI) contributes to the NADP(+) binding site.

It belongs to the glutamyl-tRNA reductase family. As to quaternary structure, homodimer.

It catalyses the reaction (S)-4-amino-5-oxopentanoate + tRNA(Glu) + NADP(+) = L-glutamyl-tRNA(Glu) + NADPH + H(+). It participates in porphyrin-containing compound metabolism; protoporphyrin-IX biosynthesis; 5-aminolevulinate from L-glutamyl-tRNA(Glu): step 1/2. Catalyzes the NADPH-dependent reduction of glutamyl-tRNA(Glu) to glutamate 1-semialdehyde (GSA). This Pseudomonas savastanoi pv. phaseolicola (strain 1448A / Race 6) (Pseudomonas syringae pv. phaseolicola (strain 1448A / Race 6)) protein is Glutamyl-tRNA reductase.